Consider the following 271-residue polypeptide: Short-chain dehydrogenase PC-15 (271 aa).

Positions 8, 34, 40, 56, 84, 148, 152, 181, and 183 each coordinate NADP(+). Tyr-148 functions as the Proton acceptor in the catalytic mechanism. Catalysis depends on Lys-152, which acts as the Lowers pKa of active site Tyr.

Belongs to the short-chain dehydrogenases/reductases (SDR) family.

Its pathway is secondary metabolite biosynthesis. Its function is as follows. Short-chain dehydrogenase; part of the gene cluster that mediates the biosynthesis of the indole diterpenes penitrems. The geranylgeranyl diphosphate (GGPP) synthase penG catalyzes the first step in penitrem biosynthesis via conversion of farnesyl pyrophosphate and isopentyl pyrophosphate into geranylgeranyl pyrophosphate (GGPP). Condensation of indole-3-glycerol phosphate with GGPP by the prenyl transferase penC then forms 3-geranylgeranylindole (3-GGI). Epoxidation by the FAD-dependent monooxygenase penM leads to a epoxidized-GGI that is substrate of the terpene cyclase penB for cyclization to yield paspaline. Paspaline is subsequently converted to 13-desoxypaxilline by the cytochrome P450 monooxygenase penP, the latter being then converted to paxilline by the cytochrome P450 monooxygenase penQ. Paxilline is converted to beta-paxitriol via C-10 ketoreduction by the short-chain dehydrogenase PC-15 which can be monoprenylated at the C-20 by the indole diterpene prenyltransferase penD. A two-step elimination (acetylation and elimination) process performed by the O-acetyltransferase PC-16 and the P.simplicissimum ptmI-ortholog not yet identified in P.crustosum, leads to the production of the prenylated form of penijanthine. The FAD-linked oxidoreductase ptmO then converts the prenylated form of penijanthine into PC-M5 which is in turn transformed into PC-M4 by the aromatic dimethylallyltransferase PC-22. A series of oxidation steps involving 4 cytochrome P450 monooxygenases (PC-21, PC-05, PC-23, PC-20) and a FAD-dependent monooxygenase (PC-14) are required for the transformation of PC-M4 to penitrems A and E. Synthesis of these final products is proposed to proceed via penitrems D and C (PC-21, PC-05, PC-14) and penitrems B and F (PC-21, PC-05, PC-14, PC-23). The polypeptide is Short-chain dehydrogenase PC-15 (Penicillium crustosum (Blue mold fungus)).